The sequence spans 203 residues: MRVLTRFMLSAADARQFPAAGAPEIAFLGRSNVGKSSLINAIVGSKIAKTSSTPGRTQTINFFEIRRPGKPRPDWIFADLPGYGYARVPKELTAEWPKFIDPYLHERPTLALCVSIVDVSVPPQKKDLELLNWLRHVGRPFVVVGTKIDRVSGNQLRNNLLKLKEELLVEEVVPFSAKGTTGHNELWKKIFEAAGTDAPATAG.

Residues 21–196 enclose the EngB-type G domain; the sequence is GAPEIAFLGR…WKKIFEAAGT (176 aa). Residues 29 to 36, 55 to 59, 79 to 82, 146 to 149, and 175 to 177 each bind GTP; these read GRSNVGKS, GRTQT, DLPG, TKID, and FSA. Residues Ser36 and Thr57 each contribute to the Mg(2+) site.

The protein belongs to the TRAFAC class TrmE-Era-EngA-EngB-Septin-like GTPase superfamily. EngB GTPase family. Requires Mg(2+) as cofactor.

Necessary for normal cell division and for the maintenance of normal septation. This Koribacter versatilis (strain Ellin345) protein is Probable GTP-binding protein EngB.